An 84-amino-acid polypeptide reads, in one-letter code: Small ribosomal subunit protein bS18A (84 aa).

It belongs to the bacterial ribosomal protein bS18 family. As to quaternary structure, part of the 30S ribosomal subunit. Forms a tight heterodimer with protein bS6.

Binds as a heterodimer with protein bS6 to the central domain of the 16S rRNA, where it helps stabilize the platform of the 30S subunit. This Mycolicibacterium paratuberculosis (strain ATCC BAA-968 / K-10) (Mycobacterium paratuberculosis) protein is Small ribosomal subunit protein bS18A.